We begin with the raw amino-acid sequence, 322 residues long: Secreted effector protein SseI (322 aa).

Interacts with host IQGAP1 and host TRIP6 (thyroid receptor-interacting protein 6).

It localises to the secreted. Its subcellular location is the host cytoplasm. In terms of biological role, effector proteins function to alter host cell physiology and promote bacterial survival in host tissues. This protein is required to maintain a long-term chronic systemic infection in mice. It inhibits normal cell migration of primary macrophages and dendritic cells, by a mechanism that involves interaction with the host factor IQGAP1, an important regulator of the cytoskeleton and cell migration. Also accelerates the systemic spread of infection from the gastrointestinal tract to the bloodstream, probably by interacting with host TRIP6. The protein is Secreted effector protein SseI (sseI) of Salmonella typhimurium (strain LT2 / SGSC1412 / ATCC 700720).